The sequence spans 256 residues: MAGGTIWKGYIHFADTDVAVKLHAAVKAERIQFHLLHKRDHVKLHQQMICAYEKIPVPTEAQTKGFEVEEGKYIIVDPDELEQTAPESSRMIEVHEFVKTGQIDPIFLDRVYYLEPDLHSEGYSELVGALQEMGAEGICTWTMRNRSYLGALQASGKILRLNTLRYADEVISVKSLELQESPVSEKELKIGSDLINQLTTPFQPQKFENEHEKKLQKLIEKKARGEKIALLRPRLLKPTASDKLLQALEESLKKVA.

A Ku domain is found at 13-184; that stretch reads FADTDVAVKL…SLELQESPVS (172 aa).

Belongs to the prokaryotic Ku family. In terms of assembly, homodimer. Interacts with LigD.

With LigD forms a non-homologous end joining (NHEJ) DNA repair enzyme, which repairs dsDNA breaks with reduced fidelity. Binds linear dsDNA with 5'- and 3'- overhangs but not closed circular dsDNA nor ssDNA. Recruits and stimulates the ligase activity of LigD. This Geotalea uraniireducens (strain Rf4) (Geobacter uraniireducens) protein is Non-homologous end joining protein Ku 2.